The chain runs to 410 residues: Indoleamine 2,3-dioxygenase nanC (410 aa).

Histidine 309 contacts heme.

The protein belongs to the indoleamine 2,3-dioxygenase family. It depends on heme as a cofactor.

The catalysed reaction is D-tryptophan + O2 = N-formyl-D-kynurenine. It catalyses the reaction L-tryptophan + O2 = N-formyl-L-kynurenine. The protein operates within secondary metabolite biosynthesis. Indoleamine 2,3-dioxygenase; part of the gene cluster that mediates the biosynthesis of the benzazepine alkaloid nanangelenin A which contains an unprecedented 3,4-dihydro-1-benzazepine-2,5-dione-N-prenyl-N-acetoxy-anthranilamide scaffold. The first step of nanangelenin biosynthesis is catalyzed by the indoleamine 2,3-dioxygenase nanC which produces N-formyl-kynurenine through the catabolism of tryptophan. The two-module NRPS nanA then utilizes anthranilate (Ant) and L-kynurenine (L-Kyn) to assemble the dipeptide product nanangelenin B. The first adenylation domain of nanA (A1) loads anthranilate onto the T1 domain, while A2 loads kynurenine, generated through spontaneous nonenzymatic deformylation of the nanC-supplied N-formyl-kynurenine. The peptide bond formation between the tethered amino acids is catalyzed by the first condensation domain (C1) between anthranilate's carbonyl carbon and kynurenine's aliphatic primary amine. The second C domain (C2) catalyzes the final cyclization event between the aromatic amine of kynurenine and the tethered carbonyl carbon, yielding nanangelenin B. The terminal T3 domain enhances the catalytic efficiency of C2, suggesting the T2-tethered Ant-L-Kyn is transferred to T3 prior to cyclization by C2. Once released from nanA, nanangelenin B is then prenylated by the prenyltransferase nanD to form nanangelenin C. Nanangelenin C is then N-hydroxylated by the FAD-dependent monooxygenase nanF and further acetylated by the acetyltransferase nanB to yield nanangelenin F. Finally, the N-methyltransferase nanE methylates the amide nitrogen of 1-benzazepine to convert nanangelenin F into nanangelenin A. NanE is also able to methylate most of the intermediates of the pathway such as nanangelenin B and nanangelenin C to produce nanangelenin D and nanangelenin E, respectively. In Aspergillus nanangensis, this protein is Indoleamine 2,3-dioxygenase nanC.